The primary structure comprises 170 residues: uncharacterized protein (170 aa).

The signal sequence occupies residues 1 to 28 (MTGGVMSQKFVVGAGLLVCSVCSLSAMA).

The protein belongs to the fimbrial protein family.

Its function is as follows. Part of the yfcOPQRSUV fimbrial operon. Could contribute to adhesion to various surfaces in specific environmental niches. Increases adhesion to eukaryotic T24 bladder epithelial cells in the absence of fim genes. This is an uncharacterized protein from Escherichia coli (strain K12).